Reading from the N-terminus, the 401-residue chain is Glutamyl-tRNA reductase (401 aa).

Substrate contacts are provided by residues 49-52 (TCNR), Ser92, 97-99 (END), and Gln103. Residue Cys50 is the Nucleophile of the active site. 171-176 (GNGKMA) provides a ligand contact to NADP(+).

This sequence belongs to the glutamyl-tRNA reductase family. Homodimer.

It catalyses the reaction (S)-4-amino-5-oxopentanoate + tRNA(Glu) + NADP(+) = L-glutamyl-tRNA(Glu) + NADPH + H(+). It participates in porphyrin-containing compound metabolism; protoporphyrin-IX biosynthesis; 5-aminolevulinate from L-glutamyl-tRNA(Glu): step 1/2. Catalyzes the NADPH-dependent reduction of glutamyl-tRNA(Glu) to glutamate 1-semialdehyde (GSA). The sequence is that of Glutamyl-tRNA reductase from Picrophilus torridus (strain ATCC 700027 / DSM 9790 / JCM 10055 / NBRC 100828 / KAW 2/3).